We begin with the raw amino-acid sequence, 152 residues long: Protein SprT-like (152 aa).

Positions 7–148 (QRLVEEVSLQ…GKCKGKLILI (142 aa)) constitute a SprT-like domain. A Zn(2+)-binding site is contributed by His-67. Residue Glu-68 is part of the active site. His-71 lines the Zn(2+) pocket.

It belongs to the SprT family. Zn(2+) serves as cofactor.

The protein resides in the cytoplasm. This Bacillus cereus (strain ATCC 10987 / NRS 248) protein is Protein SprT-like.